The chain runs to 886 residues: DNA replication licensing factor mcm2 (886 aa).

Residues 1 to 12 are compositionally biased toward polar residues; that stretch reads MADSSESFNIAT. 3 disordered regions span residues 1 to 65, 77 to 104, and 120 to 151; these read MADS…MERD, VEGLDDEEDVEDLTASQREAAEQSMRMR, and LYDSDEEEEDRPARKRRMAERAAEGAPEEDEE. Composition is skewed to acidic residues over residues 47-58 and 78-88; these read VPEEEEDGEELI and EGLDDEEDVED. Positions 95 to 104 are enriched in basic and acidic residues; it reads EAAEQSMRMR. The C4-type zinc finger occupies 314–340; it reads CNKCNFILGPFFQSQNQEVRPGSCPEC. One can recognise an MCM domain in the interval 458–665; it reads IGERIFASIA…QDEMLARFVV (208 aa). Residues S515 and Q516 each coordinate ADP. The Arginine finger signature appears at 640 to 643; sequence SRFD.

It belongs to the MCM family. Component of the mcm2-7 complex (RLF-M). The complex forms a toroidal hexameric ring with the proposed subunit order mcm2-mcm6-mcm4-mcm7-mcm3-mcm5. Component of the replisome complex. Component of the CMG helicase complex, composed of the mcm2-7 complex, the GINS complex and cdc45. In terms of processing, may be in a phosphorylated state in the mitotic mcm complex. Phosphorylated in the interphase mcm complex. Phosphorylated by the cdc7-dbf4 and cdc7-dbf4b complexes.

Its subcellular location is the nucleus. The protein resides in the chromosome. It carries out the reaction ATP + H2O = ADP + phosphate + H(+). Acts as a component of the MCM2-7 complex (MCM complex) which is the replicative helicase essential for 'once per cell cycle' DNA replication initiation and elongation in eukaryotic cells. Core component of CDC45-MCM-GINS (CMG) helicase, the molecular machine that unwinds template DNA during replication, and around which the replisome is built. The active ATPase sites in the MCM2-7 ring are formed through the interaction surfaces of two neighboring subunits such that a critical structure of a conserved arginine finger motif is provided in trans relative to the ATP-binding site of the Walker A box of the adjacent subunit. The six ATPase active sites, however, are likely to contribute differentially to the complex helicase activity. Required for the entry in S phase and for cell division. This chain is DNA replication licensing factor mcm2 (mcm2), found in Xenopus laevis (African clawed frog).